The sequence spans 249 residues: Uridylate kinase (249 aa).

An ATP-binding site is contributed by 13–16 (KLSG). Glycine 55 provides a ligand contact to UMP. Residues glycine 56 and arginine 60 each contribute to the ATP site. Residues aspartate 75 and 136–143 (IGNPFFTT) contribute to the UMP site. 3 residues coordinate ATP: threonine 163, phenylalanine 169, and aspartate 172.

The protein belongs to the UMP kinase family. In terms of assembly, homohexamer.

It is found in the cytoplasm. The enzyme catalyses UMP + ATP = UDP + ADP. The protein operates within pyrimidine metabolism; CTP biosynthesis via de novo pathway; UDP from UMP (UMPK route): step 1/1. Inhibited by UTP. Its function is as follows. Catalyzes the reversible phosphorylation of UMP to UDP. This chain is Uridylate kinase, found in Baumannia cicadellinicola subsp. Homalodisca coagulata.